The sequence spans 97 residues: Large ribosomal subunit protein eL30 (97 aa).

Belongs to the eukaryotic ribosomal protein eL30 family.

This Methanoregula boonei (strain DSM 21154 / JCM 14090 / 6A8) protein is Large ribosomal subunit protein eL30.